The primary structure comprises 548 residues: Malate:quinone oxidoreductase (548 aa).

The tract at residues 521–548 (DKPQAADSTPKPQLKPQPVQKEVADIAL) is disordered. Over residues 530–541 (PKPQLKPQPVQK) the composition is skewed to low complexity.

This sequence belongs to the MQO family. It depends on FAD as a cofactor.

It catalyses the reaction (S)-malate + a quinone = a quinol + oxaloacetate. The protein operates within carbohydrate metabolism; tricarboxylic acid cycle; oxaloacetate from (S)-malate (quinone route): step 1/1. This Escherichia coli (strain K12) protein is Malate:quinone oxidoreductase (mqo).